Here is a 747-residue protein sequence, read N- to C-terminus: DNA damage checkpoint protein LCD1 (747 aa).

3 positions are modified to phosphoserine: Ser10, Ser11, and Ser76. Residues 62-139 (NQLVNQLNKA…MEARGKSKRE (78 aa)) are a coiled coil. The interval 145–180 (KPPSTTLSTNTNTITPDSSSVAIEAKPQSPQSKKRK) is disordered. Low complexity predominate over residues 146–160 (PPSTTLSTNTNTITP).

As to quaternary structure, forms a complex with MEC1. In terms of processing, phosphorylated by MEC1 in a cell cycle dependent manner and in response to DNA damage.

The protein localises to the cytoplasm. Its subcellular location is the nucleus. Forms a complex with the serine/threonine kinase MEC1 which activates checkpoint signaling upon genotoxic stresses. The MEC1-LCD1 complex is recruited by the single-strand-binding protein complex RPA to DNA lesions in order to initiate the DNA repair by homologous recombination, after the MRX-complex and TEL1 are displaced. Required for the recruitment of MEC1 to DNA lesions, the activation of CHK1 and RAD53 kinases and phosphorylation of RAD9 in response to DNA damage. Required for cell growth and meiotic recombination. The chain is DNA damage checkpoint protein LCD1 (LCD1) from Saccharomyces cerevisiae (strain ATCC 204508 / S288c) (Baker's yeast).